Reading from the N-terminus, the 66-residue chain is Large ribosomal subunit protein bL33c (66 aa).

The protein belongs to the bacterial ribosomal protein bL33 family.

It localises to the plastid. It is found in the chloroplast. This is Large ribosomal subunit protein bL33c from Citrus sinensis (Sweet orange).